A 286-amino-acid polypeptide reads, in one-letter code: CBY1-interacting BAR domain-containing protein 1 (286 aa).

The transit peptide at 1–47 (MLRRNLDERDAQTKQLQDAVTNVEKHFGELCQIFAAYVRKTARLRDK) directs the protein to the mitochondrion. The segment at 10 to 220 (DAQTKQLQDA…NIDEDEDLEV (211 aa)) is BAR-like. Residues 107–178 (KMKRDDLKAT…IDNFEKQKIK (72 aa)) adopt a coiled-coil conformation. The tract at residues 258-286 (GQISTCRTRKDQQVEDEDDEELDVTEDEN) is disordered. Residues 271-286 (VEDEDDEELDVTEDEN) show a composition bias toward acidic residues.

It belongs to the CIBAR family. In terms of assembly, homodimer (via BAR-like domain). Heterodimer with FAM92B (via BAR-like domains). Interacts (via BAR-like domain) with CBY1; this interaction is required for targeting FAM92A to centriole and cilium basal body. Interacts (via BAR-like domain) with CBY3; both proteins form a ninefold symmetric structure at the flagellar base; are recruited to the annulus in a mutually dependent manner and regulate annulus positionning. In terms of tissue distribution, expressed in the heart, liver, spleen, lung, kidney, brain and muscle (at protein level). Strongly expressed throughout the developing limb bud, including the progress zone and the apical ectodermal ridge.

It is found in the cytoplasm. The protein resides in the cytoskeleton. Its subcellular location is the microtubule organizing center. The protein localises to the centrosome. It localises to the centriole. It is found in the cilium basal body. The protein resides in the cell projection. Its subcellular location is the cilium. The protein localises to the nucleus. It localises to the mitochondrion inner membrane. It is found in the flagellum. Its function is as follows. Plays a critical role in regulating mitochondrial ultrastructure and function by maintaining the integrity of mitochondrial morphology, particularly the organization of cristae. Preferentially binds to negatively charged phospholipids like cardiolipin and phosphatidylinositol 4,5-bisphosphate enhancing its interaction with mitochondrial membranes. Induces membrane curvature and tubulation, which are critical for maintaining mitochondrial ultrastructure and the organization of cristae. Plays a crucial role in ciliogenesis. May play a role in limb development through its role in ciliogenesis. Plays a key role in the correct positioning of the annulus, a septin-based ring structure in the sperm flagellum, serving both as a physical barrier and a membrane diffusion barrier that separates the midpiece (MP) from the principal piece (PP). This positioning is essential for proper sperm motility and function. Interacts with CBY3 to form a complex which localizes to the curved membrane region of the flagellar pocket. By doing so, may provide stability and rigidity to the periannular membrane to prevent membrane deformation. This function is crucial for halting annulus migration at the proximal end of the fibrous sheath-containing PP. The protein is CBY1-interacting BAR domain-containing protein 1 of Mus musculus (Mouse).